The following is a 301-amino-acid chain: General transcription and DNA repair factor IIH subunit TFB4 (301 aa).

Residues 259–276 form a C4-type zinc finger; that stretch reads CSVCLSIFCEHHKKCSTC.

Belongs to the TFB4 family. In terms of assembly, component of the 7-subunit TFIIH core complex composed of XPB, XPD, TFB1/GTF2H1, GTF2H2/P44, TFB4/GTF2H3, TFB2/GTF2H4 and TFB5/GTF2H5, which is active in NER. The core complex associates with the 3-subunit CDK-activating kinase (CAK) module composed of CYCH1/cyclin H1, CDKD and MAT1/At4g30820 to form the 10-subunit holoenzyme (holo-TFIIH) active in transcription.

It is found in the nucleus. In terms of biological role, component of the general transcription and DNA repair factor IIH (TFIIH) core complex, which is involved in general and transcription-coupled nucleotide excision repair (NER) of damaged DNA and, when complexed to CAK, in RNA transcription by RNA polymerase II. In NER, TFIIH acts by opening DNA around the lesion to allow the excision of the damaged oligonucleotide and its replacement by a new DNA fragment. In transcription, TFIIH has an essential role in transcription initiation. When the pre-initiation complex (PIC) has been established, TFIIH is required for promoter opening and promoter escape. Phosphorylation of the C-terminal tail (CTD) of the largest subunit of RNA polymerase II by the kinase module CAK controls the initiation of transcription. The protein is General transcription and DNA repair factor IIH subunit TFB4 of Arabidopsis thaliana (Mouse-ear cress).